The primary structure comprises 91 residues: NADH-ubiquinone oxidoreductase chain 4L (91 aa).

A run of 2 helical transmembrane segments spans residues 2 to 22 (LIMI…QTHL) and 38 to 58 (LGLG…ALVL).

Belongs to the complex I subunit 4L family.

It localises to the mitochondrion membrane. It catalyses the reaction a ubiquinone + NADH + 5 H(+)(in) = a ubiquinol + NAD(+) + 4 H(+)(out). Functionally, core subunit of the mitochondrial membrane respiratory chain NADH dehydrogenase (Complex I) that is believed to belong to the minimal assembly required for catalysis. Complex I functions in the transfer of electrons from NADH to the respiratory chain. The immediate electron acceptor for the enzyme is believed to be ubiquinone. This is NADH-ubiquinone oxidoreductase chain 4L (ND4L) from Branchiostoma floridae (Florida lancelet).